We begin with the raw amino-acid sequence, 249 residues long: 3alpha-hydroxy bile acid-CoA-ester 3-dehydrogenase 1/3 (249 aa).

NAD(+) is bound by residues 15–18 (TRGI), Glu-38, Glu-42, and Asn-92. Ser-144 provides a ligand contact to substrate. Catalysis depends on proton donor/acceptor residues Tyr-157 and Lys-161. NAD(+) is bound by residues Lys-161 and 190-192 (VDT).

This sequence belongs to the short-chain dehydrogenases/reductases (SDR) family. As to quaternary structure, homotetramer.

It carries out the reaction a 3alpha-hydroxy bile acid CoA + NAD(+) = a 3-oxo bile acid CoA + NADH + H(+). It catalyses the reaction choloyl-CoA + NAD(+) = 7alpha,12alpha-dihydroxy-3-oxochol-24-oyl-CoA + NADH + H(+). The catalysed reaction is chenodeoxycholoyl-CoA + NAD(+) = 7alpha-hydroxy-3-oxochol-24-oyl-CoA + NADH + H(+). The enzyme catalyses deoxycholoyl-CoA + NAD(+) = 12alpha-hydroxy-3-oxocholan-24-oyl-CoA + NADH + H(+). It carries out the reaction lithocholoyl-CoA + NAD(+) = 3-oxocholan-24-oyl-CoA + NADH + H(+). The protein operates within lipid metabolism; bile acid biosynthesis. Involved in the multi-step bile acid 7alpha-dehydroxylation pathway that transforms primary bile acids to secondary bile acids in the human gut. Catalyzes the oxidation of C3-hydroxyl group of CoA conjugated bile acids generating a C3-oxo bile acid intermediate. Can use choloyl-CoA, chenodeoxycholoyl-CoA, deoxycholoyl-CoA, and lithocholoyl-CoA as substrates with similar efficiency. Highly prefers NAD over NADP as cosubstrate. Also catalyzes the reverse reactions; in vitro, the preferred direction of reaction depends on the pH. Has very little activity with unconjugated (non-CoA) bile acid substrates. In Clostridium scindens (strain JCM 10418 / VPI 12708), this protein is 3alpha-hydroxy bile acid-CoA-ester 3-dehydrogenase 1/3 (baiA1).